The primary structure comprises 182 residues: Early nodulin-like protein 14 (182 aa).

The N-terminal stretch at 1-28 (MFLSASMASSSLHVAIFSLIFLFSLAAA) is a signal peptide. The 105-residue stretch at 29–133 (NEVTVGGKSG…GQKLSLVVIS (105 aa)) folds into the Phytocyanin domain. The cysteines at positions 87 and 121 are disulfide-linked. Asparagine 88 and asparagine 95 each carry an N-linked (GlcNAc...) asparagine glycan. Serine 160 carries the GPI-anchor amidated serine lipid modification. Residues 161–182 (GSVRLGGCYVVLGLVLGLCAWF) constitute a propeptide, removed in mature form.

The protein belongs to the early nodulin-like (ENODL) family. As to quaternary structure, interacts strongly and specifically with the extracellular domain of FERONIA at the synergid cell surface. Mostly expressed in seedlings and flowers, and, to a lower extent, in roots, stems and seeds, but barely in leaves.

The protein resides in the cell membrane. May act as a carbohydrate transporter. Required, together with ENODL11, ENODL12, ENODL13, ENODL14 and ENODL15, for male-female communication and pollen tube reception and burst at the synergid cell surface of the female gametophyte. The polypeptide is Early nodulin-like protein 14 (Arabidopsis thaliana (Mouse-ear cress)).